A 291-amino-acid polypeptide reads, in one-letter code: ATP synthase gamma chain (291 aa).

This sequence belongs to the ATPase gamma chain family. As to quaternary structure, F-type ATPases have 2 components, CF(1) - the catalytic core - and CF(0) - the membrane proton channel. CF(1) has five subunits: alpha(3), beta(3), gamma(1), delta(1), epsilon(1). CF(0) has three main subunits: a, b and c.

The protein localises to the cell inner membrane. Its function is as follows. Produces ATP from ADP in the presence of a proton gradient across the membrane. The gamma chain is believed to be important in regulating ATPase activity and the flow of protons through the CF(0) complex. This chain is ATP synthase gamma chain, found in Persephonella marina (strain DSM 14350 / EX-H1).